The sequence spans 691 residues: Elongation factor G (691 aa).

In terms of domain architecture, tr-type G spans 8–282 (ERVRNIGIAA…AVVDYLPAPV (275 aa)). Residues 17–24 (AHIDAGKT), 81–85 (DTPGH), and 135–138 (NKMD) each bind GTP.

It belongs to the TRAFAC class translation factor GTPase superfamily. Classic translation factor GTPase family. EF-G/EF-2 subfamily.

The protein localises to the cytoplasm. Functionally, catalyzes the GTP-dependent ribosomal translocation step during translation elongation. During this step, the ribosome changes from the pre-translocational (PRE) to the post-translocational (POST) state as the newly formed A-site-bound peptidyl-tRNA and P-site-bound deacylated tRNA move to the P and E sites, respectively. Catalyzes the coordinated movement of the two tRNA molecules, the mRNA and conformational changes in the ribosome. This chain is Elongation factor G, found in Prochlorococcus marinus (strain AS9601).